We begin with the raw amino-acid sequence, 505 residues long: Endoglucanase 5 (505 aa).

The N-terminal stretch at 1-31 is a signal peptide; the sequence is MWMRRNQIVRKLTLGVVTTVLGMSLSFSALS. The catalytic stretch occupies residues 32-334; that stretch reads ATPVETHGQL…REQIRAGANL (303 aa). Substrate-binding positions include histidine 64, 68–69, tyrosine 95, and histidine 130; that span reads WF. Glutamate 168 serves as the catalytic Proton donor. Tyrosine 230 provides a ligand contact to substrate. Residue glutamate 256 is the Nucleophile of the active site. Substrate contacts are provided by residues 262-263, tryptophan 290, and 295-297; these read AS and KSE. The disordered stretch occupies residues 332 to 355; sequence ANLGGGDTPTTPTEPTNPGNGTTG. The interval 335 to 352 is linker; sequence GGGDTPTTPTEPTNPGNG. A compositionally biased stretch (low complexity) spans 339–355; the sequence is TPTTPTEPTNPGNGTTG. A CBM3 domain is found at 353–505; the sequence is TTGDVVLQYR…KGTLVWGVEP (153 aa).

It belongs to the glycosyl hydrolase 5 (cellulase A) family.

The protein resides in the secreted. It carries out the reaction Endohydrolysis of (1-&gt;4)-beta-D-glucosidic linkages in cellulose, lichenin and cereal beta-D-glucans.. Its function is as follows. Endoglucanase with some exoglucanase activity. This is Endoglucanase 5 (celV) from Pectobacterium carotovorum subsp. carotovorum (Erwinia carotovora subsp. carotovora).